We begin with the raw amino-acid sequence, 579 residues long: A-type ATP synthase subunit A (579 aa).

229 to 236 (GPFGSGKT) lines the ATP pocket.

This sequence belongs to the ATPase alpha/beta chains family. Has multiple subunits with at least A(3), B(3), C, D, E, F, H, I and proteolipid K(x).

It is found in the cell membrane. It catalyses the reaction ATP + H2O + 4 H(+)(in) = ADP + phosphate + 5 H(+)(out). Component of the A-type ATP synthase that produces ATP from ADP in the presence of a proton gradient across the membrane. The A chain is the catalytic subunit. The polypeptide is A-type ATP synthase subunit A (Methanocella arvoryzae (strain DSM 22066 / NBRC 105507 / MRE50)).